The sequence spans 225 residues: Protein-L-isoaspartate O-methyltransferase (225 aa).

Ser-75 is a catalytic residue.

This sequence belongs to the methyltransferase superfamily. L-isoaspartyl/D-aspartyl protein methyltransferase family.

It is found in the cytoplasm. The catalysed reaction is [protein]-L-isoaspartate + S-adenosyl-L-methionine = [protein]-L-isoaspartate alpha-methyl ester + S-adenosyl-L-homocysteine. Functionally, catalyzes the methyl esterification of L-isoaspartyl residues in peptides and proteins that result from spontaneous decomposition of normal L-aspartyl and L-asparaginyl residues. It plays a role in the repair and/or degradation of damaged proteins. This Xanthomonas oryzae pv. oryzae (strain PXO99A) protein is Protein-L-isoaspartate O-methyltransferase.